We begin with the raw amino-acid sequence, 304 residues long: Glutamyl-Q tRNA(Asp) synthetase (304 aa).

L-glutamate-binding positions include 14-18 and Glu50; that span reads RFAPS. Positions 17 to 27 match the 'HIGH' region motif; the sequence is PSPSGPLHFGS. Zn(2+)-binding residues include Cys106, Cys108, Tyr120, and Cys124. 2 residues coordinate L-glutamate: Tyr178 and Arg196. A 'KMSKS' region motif is present at residues 234 to 238; sequence KLSKQ. Residue Lys237 participates in ATP binding.

This sequence belongs to the class-I aminoacyl-tRNA synthetase family. GluQ subfamily. Zn(2+) serves as cofactor.

In terms of biological role, catalyzes the tRNA-independent activation of glutamate in presence of ATP and the subsequent transfer of glutamate onto a tRNA(Asp). Glutamate is transferred on the 2-amino-5-(4,5-dihydroxy-2-cyclopenten-1-yl) moiety of the queuosine in the wobble position of the QUC anticodon. The sequence is that of Glutamyl-Q tRNA(Asp) synthetase from Vibrio cholerae serotype O1 (strain ATCC 39315 / El Tor Inaba N16961).